The following is a 142-amino-acid chain: Galactose-binding lectin (142 aa).

Residues 1–141 (TYAEVESFGV…GTDIWDLLLL (141 aa)) form the Galectin domain.

Homotetramer.

Its activity is regulated as follows. Cytotoxic activity against L.infantum promastigotes is completely inhibited by D-galactose. Inhibition activity against biofilm formation by S.aureus and S.epidermidis is inhibited by alpha-lactose. Hemagglutination activity is inhibited by alpha-lactose (MIC=100 mM), beta-lactose (MIC=100 mM), lactulose (MIC=100 mM), bovine submaxillary mucin (BSM) (MIC=32 ug/ml), fetuin (MIC=16 ug/ml), porcine stomach mucin (PSM) type 2 (MIC=8 ug/ml) and PSM type 3 (MIC=8 ug/ml). Its function is as follows. Galactose-binding lectin. Displays antibacterial and hemagglutinin activity. Inhibits the growth of L.infantum promastigotes by damaging their membrane integrity and inducing cell apoptosis via the production of reactive oxygen species (ROS). Inhibition of L.infantum promastigotes appears to increase with time (MIC=1.2 uM/ml after 24 hours, MIC=0.9 uM/ml after 48 hours and MIC=0.6 uM/ml after 72 hours). Agglutinates Gram-negative and Gram-positive bacteria including E.coli, S.aureus and S.epidermidis, and inhibits biofilm formation by S.aureus and S.epidermidis. Displays hemagglutination activity towards all types of human erythrocytes (O, A and B) and rabbit erythrocytes. The protein is Galactose-binding lectin of Chondrilla caribensis (Chicken liver sponge).